A 728-amino-acid chain; its full sequence is Microtubule-associated protein VP5 (728 aa).

This sequence belongs to the reoviridae microtubule-associated protein family.

It is found in the virion. The protein localises to the host cytoplasm. The protein resides in the host cytoskeleton. Its function is as follows. Minor inner capsid component. Displays NTPase and RNA 5'-triphosphatase (RTPase) activities. May function as a cofactor of polymerase. Associates with microtubules and plays a role in the formation, structural organization and morphology of viral inclusions, where the assembly of cores and the replication of viral RNA occur. This Ctenopharyngodon idella (Grass carp) protein is Microtubule-associated protein VP5 (S5).